Reading from the N-terminus, the 447-residue chain is Tubulin beta chain (447 aa).

Gln11, Glu69, Ser138, Gly142, Thr143, Gly144, Asn204, and Asn226 together coordinate GTP. Residue Glu69 participates in Mg(2+) binding.

Belongs to the tubulin family. As to quaternary structure, dimer of alpha and beta chains. A typical microtubule is a hollow water-filled tube with an outer diameter of 25 nm and an inner diameter of 15 nM. Alpha-beta heterodimers associate head-to-tail to form protofilaments running lengthwise along the microtubule wall with the beta-tubulin subunit facing the microtubule plus end conferring a structural polarity. Microtubules usually have 13 protofilaments but different protofilament numbers can be found in some organisms and specialized cells. The cofactor is Mg(2+).

The protein resides in the cytoplasm. The protein localises to the cytoskeleton. In terms of biological role, tubulin is the major constituent of microtubules, a cylinder consisting of laterally associated linear protofilaments composed of alpha- and beta-tubulin heterodimers. Microtubules grow by the addition of GTP-tubulin dimers to the microtubule end, where a stabilizing cap forms. Below the cap, tubulin dimers are in GDP-bound state, owing to GTPase activity of alpha-tubulin. The chain is Tubulin beta chain (TUB2) from Penicillium digitatum (Green mold).